Consider the following 215-residue polypeptide: Probable GTP-binding protein EngB (215 aa).

Residues 30 to 204 enclose the EngB-type G domain; it reads EGLEVAFAGR…QMVLAQWLGL (175 aa). GTP contacts are provided by residues 38 to 45, 64 to 68, 82 to 85, 149 to 152, and 182 to 185; these read GRSNAGKS, GRTQL, DLPG, TKAD, and LFSA. Residues S45 and T66 each coordinate Mg(2+).

It belongs to the TRAFAC class TrmE-Era-EngA-EngB-Septin-like GTPase superfamily. EngB GTPase family. Mg(2+) serves as cofactor.

Functionally, necessary for normal cell division and for the maintenance of normal septation. This is Probable GTP-binding protein EngB from Pseudomonas aeruginosa (strain ATCC 15692 / DSM 22644 / CIP 104116 / JCM 14847 / LMG 12228 / 1C / PRS 101 / PAO1).